The sequence spans 700 residues: Polyribonucleotide nucleotidyltransferase (700 aa).

Mg(2+)-binding residues include D485 and D491. The region spanning 552–611 (PRITVIKINPEKIRDVIGKGGAVIRALTEETGTTIELEDDGTVKIASSNGEATKEAIRRI) is the KH domain. The region spanning 621–689 (GRIYNGKVIR…RQGRVRLSIK (69 aa)) is the S1 motif domain.

The protein belongs to the polyribonucleotide nucleotidyltransferase family. In terms of assembly, component of the RNA degradosome, which is a multiprotein complex involved in RNA processing and mRNA degradation. Requires Mg(2+) as cofactor.

It localises to the cytoplasm. It carries out the reaction RNA(n+1) + phosphate = RNA(n) + a ribonucleoside 5'-diphosphate. Involved in mRNA degradation. Catalyzes the phosphorolysis of single-stranded polyribonucleotides processively in the 3'- to 5'-direction. This Shewanella baltica (strain OS185) protein is Polyribonucleotide nucleotidyltransferase.